Reading from the N-terminus, the 377-residue chain is DNA methyltransferase CcrM (377 aa).

One can recognise an RAMA domain in the interval L271 to A373.

The protein belongs to the N(4)/N(6)-methyltransferase family.

The catalysed reaction is a 2'-deoxyadenosine in DNA + S-adenosyl-L-methionine = an N(6)-methyl-2'-deoxyadenosine in DNA + S-adenosyl-L-homocysteine + H(+). Its function is as follows. A beta subtype methylase that recognizes the double-stranded sequence 5'-GANTC-3' and methylates on A-2 on both strands. Overexpression from a moderate-copy number plasmid (10-12 copies/cell) leads to enlarged, branched cells, many with 3-5 genome equivalents. Contributes to the accurate cell-cycle control of DNA replication and cellular morphology. The polypeptide is DNA methyltransferase CcrM (Brucella abortus (strain 2308)).